Reading from the N-terminus, the 181-residue chain is Protein GrpE (181 aa).

Residues 1–24 (MSEENIGENEVETPETEPSAEAEV) show a composition bias toward acidic residues. The tract at residues 1–26 (MSEENIGENEVETPETEPSAEAEVES) is disordered.

Belongs to the GrpE family. In terms of assembly, homodimer.

It is found in the cytoplasm. Participates actively in the response to hyperosmotic and heat shock by preventing the aggregation of stress-denatured proteins, in association with DnaK and GrpE. It is the nucleotide exchange factor for DnaK and may function as a thermosensor. Unfolded proteins bind initially to DnaJ; upon interaction with the DnaJ-bound protein, DnaK hydrolyzes its bound ATP, resulting in the formation of a stable complex. GrpE releases ADP from DnaK; ATP binding to DnaK triggers the release of the substrate protein, thus completing the reaction cycle. Several rounds of ATP-dependent interactions between DnaJ, DnaK and GrpE are required for fully efficient folding. The sequence is that of Protein GrpE from Rhizorhabdus wittichii (strain DSM 6014 / CCUG 31198 / JCM 15750 / NBRC 105917 / EY 4224 / RW1) (Sphingomonas wittichii).